The following is a 203-amino-acid chain: Interferon type B (203 aa).

Residues 1–27 (MTANHQSPGMHSILLLLLLPALTTTFS) form the signal peptide. Disulfide bonds link cysteine 28–cysteine 125 and cysteine 57–cysteine 164. Asparagine 37 and asparagine 160 each carry an N-linked (GlcNAc...) asparagine glycan.

The protein belongs to the alpha/beta interferon family.

The protein resides in the secreted. Functionally, has antiviral activities. In Gallus gallus (Chicken), this protein is Interferon type B (IFNB).